Consider the following 160-residue polypeptide: Cytochrome b6-f complex subunit 4 (160 aa).

3 consecutive transmembrane segments (helical) span residues 36 to 56, 95 to 115, and 131 to 151; these read LLYV…ALAV, LLGV…PFIE, and TVFL…ALPL.

This sequence belongs to the cytochrome b family. PetD subfamily. In terms of assembly, the 4 large subunits of the cytochrome b6-f complex are cytochrome b6, subunit IV (17 kDa polypeptide, PetD), cytochrome f and the Rieske protein, while the 4 small subunits are PetG, PetL, PetM and PetN. The complex functions as a dimer.

The protein resides in the cellular thylakoid membrane. Component of the cytochrome b6-f complex, which mediates electron transfer between photosystem II (PSII) and photosystem I (PSI), cyclic electron flow around PSI, and state transitions. The chain is Cytochrome b6-f complex subunit 4 from Desmonostoc sp. (strain PCC 7906) (Nostoc sp. (strain PCC 7906)).